A 143-amino-acid polypeptide reads, in one-letter code: FAD synthase (143 aa).

Residues 9–10, 14–17, and Asp92 each bind ATP; these read TF and HPGH.

Belongs to the archaeal FAD synthase family. As to quaternary structure, homodimer. Requires a divalent metal cation as cofactor.

The catalysed reaction is FMN + ATP + H(+) = FAD + diphosphate. Its pathway is cofactor biosynthesis; FAD biosynthesis; FAD from FMN: step 1/1. Catalyzes the transfer of the AMP portion of ATP to flavin mononucleotide (FMN) to produce flavin adenine dinucleotide (FAD) coenzyme. This chain is FAD synthase, found in Methanococcoides burtonii (strain DSM 6242 / NBRC 107633 / OCM 468 / ACE-M).